The sequence spans 257 residues: Phosphate import ATP-binding protein PstB (257 aa).

One can recognise an ABC transporter domain in the interval 5-246 (LEIKDLTAFY…EVIFTSPKNE (242 aa)). Residue 37-44 (GPSGCGKS) participates in ATP binding.

It belongs to the ABC transporter superfamily. Phosphate importer (TC 3.A.1.7) family. In terms of assembly, the complex is composed of two ATP-binding proteins (PstB), two transmembrane proteins (PstC and PstA) and a solute-binding protein (PstS).

Its subcellular location is the cell membrane. It catalyses the reaction phosphate(out) + ATP + H2O = ADP + 2 phosphate(in) + H(+). In terms of biological role, part of the ABC transporter complex PstSACB involved in phosphate import. Responsible for energy coupling to the transport system. In Tropheryma whipplei (strain Twist) (Whipple's bacillus), this protein is Phosphate import ATP-binding protein PstB.